The chain runs to 228 residues: MEKKPWEEDISIEEFKKSLNKDKITNLIIKRRWNKGKSTYHLSFNGDFEVVTKKPSTKYVTHKQLDQKLKEFKQDLMVELHDTFATKADLRDSEARINQKLEALVQVVLLHGEQINKLTQIVEKQGEQIRELQVEQKAQRQEFNARMDRLENLLVESIESTNKRFDSIEGRLDSMDSRLDSMENRLDSIEGRLDSVEGRLDSVEGRLDSMENRLDSMETRLDKIDPPK.

The protein belongs to the UPF0134 family.

The polypeptide is UPF0134 protein MPN_137 (Mycoplasma pneumoniae (strain ATCC 29342 / M129 / Subtype 1) (Mycoplasmoides pneumoniae)).